Here is a 620-residue protein sequence, read N- to C-terminus: Aspartic protease 1 (620 aa).

Residues 1 to 110 lie on the Cytoplasmic side of the membrane; the sequence is MSPSSRFRNL…LGKAVGLSTS (110 aa). Positions 1–258 are excised as a propeptide; sequence MSPSSRFRNL…SKKDDGNLSG (258 aa). The segment at 27-31 is important for proper cellular trafficking; the sequence is YASLL. Residues 111–131 traverse the membrane as a helical; Signal-anchor for type II membrane protein segment; it reads VICVVALFGIVCLCLYGLVNF. The Lumenal segment spans residues 132 to 620; that stretch reads SFTSVETSPL…KQIGFARLKN (489 aa). Residues 138–174 are disordered; that stretch reads TSPLDDPRNSPVMGELGNPQASTPSSARADTPARHDR. Over residues 156–165 the composition is skewed to polar residues; sequence PQASTPSSAR. Residues 275–616 form the Peptidase A1 domain; that stretch reads YYTEIYVGSP…DYDNKQIGFA (342 aa). Active-site residues include Asp293 and Asp476. A disulfide bond links Cys513 and Cys550.

It belongs to the peptidase A1 family. Post-translationally, proteolytically cleaved into the soluble active mature form by, at least, cysteine protease CPL. Undergoes at least four processing steps; the first cleavage removes the propeptide resulting in the production of a soluble 45 kDa protein, which is further processed into a 35 kDa form followed by an additional processing into the final active 30 kDa form.

It is found in the membrane. The protein localises to the vacuole. In terms of biological role, aspartyl protease which is dispensable for protein degradation in the vacuolar compartment (VAC) or for tachyzoite and bradyzoite viability. In Toxoplasma gondii, this protein is Aspartic protease 1.